We begin with the raw amino-acid sequence, 424 residues long: Phosphomethylpyrimidine synthase (424 aa).

Substrate contacts are provided by residues Asn-66, Met-95, Tyr-124, His-163, 185-187, 226-229, and Glu-265; these read SRG and DGMR. A Zn(2+)-binding site is contributed by His-269. Residue Phe-292 participates in substrate binding. His-333 contacts Zn(2+). The [4Fe-4S] cluster site is built by Cys-408, Cys-411, and Cys-415.

Belongs to the ThiC family. It depends on [4Fe-4S] cluster as a cofactor.

It catalyses the reaction 5-amino-1-(5-phospho-beta-D-ribosyl)imidazole + S-adenosyl-L-methionine = 4-amino-2-methyl-5-(phosphooxymethyl)pyrimidine + CO + 5'-deoxyadenosine + formate + L-methionine + 3 H(+). The protein operates within cofactor biosynthesis; thiamine diphosphate biosynthesis. In terms of biological role, catalyzes the synthesis of the hydroxymethylpyrimidine phosphate (HMP-P) moiety of thiamine from aminoimidazole ribotide (AIR) in a radical S-adenosyl-L-methionine (SAM)-dependent reaction. This chain is Phosphomethylpyrimidine synthase, found in Thermotoga neapolitana (strain ATCC 49049 / DSM 4359 / NBRC 107923 / NS-E).